The sequence spans 257 residues: 2,3,4,5-tetrahydropyridine-2,6-dicarboxylate N-acetyltransferase (257 aa).

The protein belongs to the transferase hexapeptide repeat family. DapH subfamily.

It catalyses the reaction (S)-2,3,4,5-tetrahydrodipicolinate + acetyl-CoA + H2O = L-2-acetamido-6-oxoheptanedioate + CoA. It participates in amino-acid biosynthesis; L-lysine biosynthesis via DAP pathway; LL-2,6-diaminopimelate from (S)-tetrahydrodipicolinate (acetylase route): step 1/3. Functionally, catalyzes the transfer of an acetyl group from acetyl-CoA to tetrahydrodipicolinate. The chain is 2,3,4,5-tetrahydropyridine-2,6-dicarboxylate N-acetyltransferase from Lactococcus lactis subsp. cremoris (strain SK11).